A 661-amino-acid chain; its full sequence is Hemocyanin C chain (661 aa).

The cysteines at positions 3 and 557 are disulfide-linked. Cu cation contacts are provided by histidine 200, histidine 204, histidine 230, histidine 350, histidine 354, and histidine 390. Asparagine 476 carries N-linked (GlcNAc...) asparagine glycosylation.

It belongs to the tyrosinase family. Hemocyanin subfamily. In terms of assembly, hexamer of a number of different chains, of which A, B, and C have been identified. Hemolymph.

Its subcellular location is the secreted. The protein localises to the extracellular space. Its function is as follows. Hemocyanins are copper-containing oxygen carriers occurring freely dissolved in the hemolymph of many mollusks and arthropods. The polypeptide is Hemocyanin C chain (Panulirus interruptus (California spiny lobster)).